Here is a 446-residue protein sequence, read N- to C-terminus: MNSVVSFDSSKLTPFVHENELKEMQAMVNAADKELREGTGAGNDFRGWLDLPVDYDKDEFARIKKAAKKIQSDSDVLIGIGIGGSYLGAQAAIEFLNSSFYMAEKSDYPKVVFCGNSLSGTYLSDLINWLGDKDFSLNIISKSGTTTEPSVAFRVLKAKLIEKYGKEEAAKRIYATTDRQKGALKIEADAEGYEEFVVPDDVGGRFSVLSAVGLLPIAAAGCDIDALMQGAADARAAYTDPDVSKDSPYQYAALRNILYRKGYTTELLENYEPSIRMFGEWWKQLMGESEGKDQKGIYPSSANFTTDLHSLGQYIQEGRRNLMETVVRVAGPRADVEIPNDESNLDQLNFLAGKKMNYVNDRAYEGVVLAHTDGGVPVMTVNIADQSEHTLGYLIYWFELSVAISGYLNGINPFNQPGVEAYKRNMFGLLNKPGYEDLHDELASRL.

E288 functions as the Proton donor in the catalytic mechanism. Residues H309 and K423 contribute to the active site.

Belongs to the GPI family.

It localises to the cytoplasm. The enzyme catalyses alpha-D-glucose 6-phosphate = beta-D-fructose 6-phosphate. It functions in the pathway carbohydrate biosynthesis; gluconeogenesis. Its pathway is carbohydrate degradation; glycolysis; D-glyceraldehyde 3-phosphate and glycerone phosphate from D-glucose: step 2/4. Its function is as follows. Catalyzes the reversible isomerization of glucose-6-phosphate to fructose-6-phosphate. In Lactobacillus delbrueckii subsp. bulgaricus (strain ATCC 11842 / DSM 20081 / BCRC 10696 / JCM 1002 / NBRC 13953 / NCIMB 11778 / NCTC 12712 / WDCM 00102 / Lb 14), this protein is Glucose-6-phosphate isomerase.